The primary structure comprises 250 residues: Acyl-coenzyme A diphosphatase fit1 (250 aa).

The Cytoplasmic portion of the chain corresponds to 1-23 (MTEKTASHYWNEETSILKLRRKD). Residues 24 to 44 (ILLFEIYATTLLLGSIYSIYV) traverse the membrane as a helical segment. The Lumenal segment spans residues 45 to 58 (DKWSITSYFGNSKN). Residues 59–79 (LINLIFVKRGWFWTSLVYFYH) form a helical membrane-spanning segment. Over 80-95 (AWDQKRNKIDFKFISR) the chain is Cytoplasmic. Residues 96-116 (YIVATLWWMFVTQWFIGPGLI) form a helical membrane-spanning segment. Topologically, residues 117–160 (DRTFALSGGSCKNFDGDSSVFIPLTASTCKGLNGSWSGGHDLSG) are lumenal. Asparagine 149 is a glycosylation site (N-linked (GlcNAc...) asparagine). Histidine 161 is a catalytic residue. A helical transmembrane segment spans residues 161-181 (HVFLLTHSSLFMLSENFSFIL). Residues 182 to 191 (NNGIKATSTK) are Cytoplasmic-facing. A helical transmembrane segment spans residues 192–212 (VLFGLLGLWWWMLFVTASFYH). Histidine 212 is a catalytic residue. Residue threonine 213 is a topological domain, lumenal. The helical transmembrane segment at 214–234 (TFEKCTGFFSGILEWSIVYVF) threads the bilayer. Residues 235-250 (SSRMPAVADLLGSSDY) are Cytoplasmic-facing.

Belongs to the FIT family. Fungal FIT2B/SCS3 subfamily.

Its subcellular location is the endoplasmic reticulum membrane. It carries out the reaction an acyl-CoA + H2O = an acyl-4'-phosphopantetheine + adenosine 3',5'-bisphosphate + 2 H(+). The catalysed reaction is (9Z)-octadecenoyl-CoA + H2O = S-(9Z-octadecenoyl)-4'-phosphopantetheine + adenosine 3',5'-bisphosphate + 2 H(+). The enzyme catalyses (5Z,8Z,11Z,14Z)-eicosatetraenoyl-CoA + H2O = S-(5Z,8Z,11Z,14Z-eicosatetraenoyl)-4'-phosphopantetheine + adenosine 3',5'-bisphosphate + 2 H(+). It catalyses the reaction hexadecanoyl-CoA + H2O = S-hexadecanoyl-4'-phosphopantetheine + adenosine 3',5'-bisphosphate + 2 H(+). Its function is as follows. Fatty acyl-coenzyme A (CoA) diphosphatase that hydrolyzes fatty acyl-CoA to yield acyl-4'-phosphopantetheine and adenosine 3',5'-bisphosphate. Preferentially hydrolyzes unsaturated long-chain acyl-CoA substrates in the endoplasmic reticulum (ER) lumen. This catalytic activity is required for maintaining ER structure and for lipid droplets (LDs) biogenesis, which are lipid storage organelles involved in maintaining lipid and energy homeostasis. May directly bind to diacylglycerol (DAGs) and triacylglycerol, which is also important for LD biogenesis. May support directional budding of nacent LDs from the ER into the cytosol by reducing DAG levels at sites of LD formation. May play a role in the regulation of cell morphology and cytoskeletal organization. The sequence is that of Acyl-coenzyme A diphosphatase fit1 from Schizosaccharomyces pombe (strain 972 / ATCC 24843) (Fission yeast).